An 892-amino-acid polypeptide reads, in one-letter code: Gamma-tubulin small complex component GCP3 (892 aa).

This sequence belongs to the TUBGCP family. Component of the gamma-tubulin small complex (gamma-TuSC) composed of tubulin gamma chain, gamma-tubulin complex protein 2 (GCP2) and gamma-tubulin complex protein 3 (GCP3). Interacts with tubulin gamma chain.

It localises to the cytoplasm. Its subcellular location is the cytoskeleton. It is found in the flagellum axoneme. The protein resides in the flagellum basal body. Functionally, component of the gamma-tubulin small complex (gamma-TuSC) involved in microtubule (MT) nucleation for the formation of median bodies and in the biogenesis of flagella. Gamma-TuSC may be required for the correct positioning of EB1 within the trophozoites. The protein is Gamma-tubulin small complex component GCP3 of Giardia intestinalis (strain ATCC 50803 / WB clone C6) (Giardia lamblia).